The primary structure comprises 454 residues: Guanine deaminase (454 aa).

Residues His-82 and His-84 each contribute to the Zn(2+) site. Residues 84–87 (HASQ), 213–214 (RF), 240–243 (HISE), and Asp-330 each bind substrate. The Zn(2+) site is built by His-240 and Asp-330. Ser-453 carries the phosphoserine modification.

It belongs to the metallo-dependent hydrolases superfamily. ATZ/TRZ family. Homodimer. Requires Zn(2+) as cofactor.

It catalyses the reaction guanine + H2O + H(+) = xanthine + NH4(+). It functions in the pathway purine metabolism; guanine degradation; xanthine from guanine: step 1/1. Its function is as follows. Catalyzes the hydrolytic deamination of guanine, producing xanthine and ammonia. The polypeptide is Guanine deaminase (GDA) (Pongo abelii (Sumatran orangutan)).